The chain runs to 259 residues: Global transcriptional regulator CodY (259 aa).

Residues 1-155 (MNLLEKTRKI…GATVVGMEIL (155 aa)) are GAF domain. A DNA-binding region (H-T-H motif) is located at residues 203-222 (ASKIADRVGITRSVIVNALR). Phosphoserine is present on Ser215.

Belongs to the CodY family.

It is found in the cytoplasm. In terms of biological role, DNA-binding global transcriptional regulator which is involved in the adaptive response to starvation and acts by directly or indirectly controlling the expression of numerous genes in response to nutrient availability. During rapid exponential growth, CodY is highly active and represses genes whose products allow adaptation to nutrient depletion. The sequence is that of Global transcriptional regulator CodY from Anoxybacillus flavithermus (strain DSM 21510 / WK1).